Consider the following 250-residue polypeptide: ATP synthase subunit a (250 aa).

The next 6 helical transmembrane spans lie at 29–49, 84–104, 114–134, 143–163, 193–213, and 216–236; these read ASLF…FATS, FFPL…LGMF, IIVT…YGFY, VFVP…IEII, FVAS…LPLI, and VALT…FAVL.

This sequence belongs to the ATPase A chain family. As to quaternary structure, F-type ATPases have 2 components, CF(1) - the catalytic core - and CF(0) - the membrane proton channel. CF(1) has five subunits: alpha(3), beta(3), gamma(1), delta(1), epsilon(1). CF(0) has three main subunits: a(1), b(2) and c(9-12). The alpha and beta chains form an alternating ring which encloses part of the gamma chain. CF(1) is attached to CF(0) by a central stalk formed by the gamma and epsilon chains, while a peripheral stalk is formed by the delta and b chains.

Its subcellular location is the cell inner membrane. Key component of the proton channel; it plays a direct role in the translocation of protons across the membrane. In Rhizobium johnstonii (strain DSM 114642 / LMG 32736 / 3841) (Rhizobium leguminosarum bv. viciae), this protein is ATP synthase subunit a.